The following is a 394-amino-acid chain: Envelope glycoprotein D (394 aa).

Residues 1–25 (MGGTAARLGAVILFVVIVGLHGVRG) form the signal peptide. The segment at 25-57 (GKYALADASLKMADPNRFRGKDLPVLDQLTDPP) is interaction with TNFRSF14. Topologically, residues 26–339 (KYALADASLK…PYHPPATPNN (314 aa)) are virion surface. Residue His-64 participates in Zn(2+) binding. Disulfide bonds link Cys-91–Cys-214, Cys-131–Cys-227, and Cys-143–Cys-152. N-linked (GlcNAc...) asparagine; by host glycosylation is found at Asn-119 and Asn-146. Position 240 (Asp-240) interacts with Zn(2+). The segment at 261 to 305 (LKIAGWHGPKAPYTSTLLPPELSETPNATQPELAPEDPEDSALLE) is profusion. Positions 275-301 (STLLPPELSETPNATQPELAPEDPEDS) are disordered. Residue Asn-287 is glycosylated (N-linked (GlcNAc...) asparagine; by host). The helical transmembrane segment at 340 to 364 (MGLIAGAVGGSLLAALVICGIVYWM) threads the bilayer. Residues 365–394 (HRRTRKAPKRIRLPHIREDDQPSSHQPLFY) are Intravirion-facing.

Belongs to the herpesviridae glycoprotein D family. Homodimer. Interacts with host receptor TNFRSF14. Interacts with host receptor NECTIN1. Interacts (via profusion domain) with gB; this interaction occurs in the absence of gH/gL. Interacts (via profusion domain) with gH/gL heterodimer; this interaction occurs in the absence of gB. Associates with the gB-gH/gL-gD complex. Interacts (via C-terminus) with UL11 tegument protein. Interacts with host RSAD2.

The protein resides in the virion membrane. Its subcellular location is the host Golgi apparatus. In terms of biological role, envelope glycoprotein that binds to the host cell entry receptors NECTIN1, TNFRSF14/HVEM and 3-O-sulfated heparan sulfate, promoting the virus entry into host cells. May trigger fusion with host membrane, by recruiting the fusion machinery composed of gB and gH/gL. This chain is Envelope glycoprotein D (gD), found in Human herpesvirus 1 (strain Patton) (HHV-1).